Here is a 370-residue protein sequence, read N- to C-terminus: Queuine tRNA-ribosyltransferase (370 aa).

Asp89 functions as the Proton acceptor in the catalytic mechanism. Residues Asp89–Phe93, Asp143, Gln187, and Gly214 each bind substrate. The segment at Gly245 to Asn251 is RNA binding. The active-site Nucleophile is the Asp264. The tract at residues Thr269–Arg273 is RNA binding; important for wobble base 34 recognition. Zn(2+) is bound by residues Cys302, Cys304, Cys307, and His333.

The protein belongs to the queuine tRNA-ribosyltransferase family. In terms of assembly, homodimer. Within each dimer, one monomer is responsible for RNA recognition and catalysis, while the other monomer binds to the replacement base PreQ1. Zn(2+) serves as cofactor.

The catalysed reaction is 7-aminomethyl-7-carbaguanine + guanosine(34) in tRNA = 7-aminomethyl-7-carbaguanosine(34) in tRNA + guanine. The protein operates within tRNA modification; tRNA-queuosine biosynthesis. Functionally, catalyzes the base-exchange of a guanine (G) residue with the queuine precursor 7-aminomethyl-7-deazaguanine (PreQ1) at position 34 (anticodon wobble position) in tRNAs with GU(N) anticodons (tRNA-Asp, -Asn, -His and -Tyr). Catalysis occurs through a double-displacement mechanism. The nucleophile active site attacks the C1' of nucleotide 34 to detach the guanine base from the RNA, forming a covalent enzyme-RNA intermediate. The proton acceptor active site deprotonates the incoming PreQ1, allowing a nucleophilic attack on the C1' of the ribose to form the product. After dissociation, two additional enzymatic reactions on the tRNA convert PreQ1 to queuine (Q), resulting in the hypermodified nucleoside queuosine (7-(((4,5-cis-dihydroxy-2-cyclopenten-1-yl)amino)methyl)-7-deazaguanosine). The polypeptide is Queuine tRNA-ribosyltransferase (Hamiltonella defensa subsp. Acyrthosiphon pisum (strain 5AT)).